Reading from the N-terminus, the 423-residue chain is Replication factor C large subunit (423 aa).

Gly63–Thr70 contributes to the ATP binding site.

The protein belongs to the activator 1 small subunits family. RfcL subfamily. In terms of assembly, heteromultimer composed of small subunits (RfcS) and large subunits (RfcL).

Its function is as follows. Part of the RFC clamp loader complex which loads the PCNA sliding clamp onto DNA. This is Replication factor C large subunit from Pyrobaculum islandicum (strain DSM 4184 / JCM 9189 / GEO3).